Reading from the N-terminus, the 445-residue chain is Enolase (445 aa).

2 residues coordinate substrate: His-165 and Glu-174. Residue Glu-217 is the Proton donor of the active site. Mg(2+)-binding residues include Asp-252, Glu-303, and Asp-330. Substrate is bound by residues Glu-303 and Asp-330. Lys-355 serves as the catalytic Proton acceptor. Substrate is bound by residues 382 to 385 and Lys-406; that span reads SHRS.

This sequence belongs to the enolase family. Homodimer. Mg(2+) is required as a cofactor.

The protein resides in the cytoplasm. The enzyme catalyses (2R)-2-phosphoglycerate = phosphoenolpyruvate + H2O. Its pathway is carbohydrate degradation; glycolysis; pyruvate from D-glyceraldehyde 3-phosphate: step 4/5. The chain is Enolase (ENO) from Eimeria tenella (Coccidian parasite).